The following is a 534-amino-acid chain: Lariat debranching enzyme A (534 aa).

4 residues coordinate a divalent metal cation: C8, H10, D39, and N84. A lariat recognition loop region spans residues 124–154 (SGIFKSHDYRKGHFERPPYSKDTVRSAYHVR). A divalent metal cation is bound by residues H174, H226, and H228. Disordered stretches follow at residues 386–439 (EEEK…QEDE) and 469–534 (SMAV…DEDE). Acidic residues predominate over residues 388-400 (EKEDFDMTEDNEA). Residues 413 to 424 (STDTSILSTSVN) show a composition bias toward polar residues. Positions 428–439 (ITLEDDDEQEDE) are enriched in acidic residues. Basic and acidic residues predominate over residues 484–499 (ELDRSESSQTEGEGKQ).

The protein belongs to the lariat debranching enzyme family. Fe(2+) serves as cofactor. Zn(2+) is required as a cofactor. The cofactor is Mn(2+).

The protein resides in the nucleus. With respect to regulation, active in presence of diverse metals including Fe(2+), Zn(2+), Mn(2+). Also activated by Ca(2+). Binds two metal cations in two adjacent alpha and beta metal-binding pockets. In terms of biological role, cleaves the 2'-5' phosphodiester linkage at the branch point of excised lariat intron RNA and converts them into linear molecules that can be subsequently degraded, thereby facilitating ribonucleotide turnover. Linked to its role in pre-mRNA processing mechanism, may also participate in retrovirus replication and have an antiviral cell-intrinsic defense function. This chain is Lariat debranching enzyme A (dbr1-a), found in Xenopus laevis (African clawed frog).